Reading from the N-terminus, the 62-residue chain is Large ribosomal subunit protein bL32 (62 aa).

Basic residues predominate over residues 1 to 16 (MAVPKRKTSPSRRGMR). Positions 1–62 (MAVPKRKTSP…QILKPKTAEV (62 aa)) are disordered. Residues 28–44 (VEDKDSGELRRPHHLDL) are compositionally biased toward basic and acidic residues.

Belongs to the bacterial ribosomal protein bL32 family.

This is Large ribosomal subunit protein bL32 from Azorhizobium caulinodans (strain ATCC 43989 / DSM 5975 / JCM 20966 / LMG 6465 / NBRC 14845 / NCIMB 13405 / ORS 571).